The primary structure comprises 389 residues: Probable nitrate transporter NarT (389 aa).

12 consecutive transmembrane segments (helical) span residues 14-34, 45-65, 69-89, 97-117, 139-159, 161-181, 211-231, 246-266, 268-288, 294-314, 331-351, and 353-373; these read TLSL…MPFI, ISII…PFGY, IVGA…PIFF, GMLM…SVGV, GNIG…IIGW, TTVR…FIFG, WYFI…NYLV, GVFI…GDKF, AVKV…ILGI, LFTV…GLIF, IVSM…TYVA, and LTGS…IALF.

Belongs to the major facilitator superfamily. Nitrate/nitrite porter (TC 2.A.1.8) family.

Its subcellular location is the cell membrane. Its function is as follows. Probably required for nitrate uptake under anoxic conditions. Also possibly involved in excretion of nitrite produced by the dissimilatory reduction of nitrate. This Staphylococcus aureus (strain bovine RF122 / ET3-1) protein is Probable nitrate transporter NarT (narT).